The chain runs to 313 residues: MEIANTQAAIPTIDISALLSPTASEQSRQTVINNMSDACHAYGFFNLVGHDIPPEAMRDALDCNKLFFALPQDRKMEVSIDKSIGRSFRGYEPPGIQTHHEGLLPDTKETFMVGREVMEGDPDCGSFSTGPNLWPSDLHKKGFQDRVMSYQARMLRLVETILDCLALGLPKSWNCTSHVFKPLLNKPSIPMRFLHYGPVEIHDDRQFGVADHTDFGFVSILLQEAGTSGLEVFYPPTKSWVPVPVFEQGFVINMGDMMQKHRHSVAFFLNGDLKLNAKALDGSGHETIVGEQIQQRLIETMGMTGNLLRRELV.

In terms of domain architecture, Fe2OG dioxygenase spans 187 to 284 (PSIPMRFLHY…LNAKALDGSG (98 aa)). His212, Asp214, and His263 together coordinate Fe cation. 2-oxoglutarate is bound at residue Lys274.

This sequence belongs to the iron/ascorbate-dependent oxidoreductase family. It depends on Fe(2+) as a cofactor.

Its pathway is secondary metabolite biosynthesis; terpenoid biosynthesis. Its function is as follows. 2-oxoglutarate-dependent dioxygenase; part of the gene cluster that mediates the biosynthesis of eupenifeldin, a bistropolone meroterpenoid that acts as an antitumor agent. The first step of eupenifeldin biosynthesis is the biosynthesis of 3-methylorcinaldehyde performed by the non-reducing polyketide synthase eupA. Oxidative dearomatization of 3-methylorcinaldehyde likely catalyzed by the FAD-dependent monooxygenase eupB is followed by oxidative ring expansion by the 2-oxoglutarate-dependent dioxygenase eupC to provide the first tropolone metabolite, tropolone stipitaldehyde. In parallel, generation of sesquiterpene alpha-humulene from farnesylpyrophosphate (FPP) is catalyzed by the terpene cyclase eupE. The cytochrome P450 monooxygenase eupD then hydroxylates humulene to humulenol. The putative Diels-Alderase eupF probably catalyzes the formation of the tropolone-humulene skeleton by linking humulenol and the polyketide moiety. The short-chain dehydrogenase/reductase eupG and the flavin-dependent monooxygenase eupH are also essential for eupenifeldin biosynthesis and are likely the additional decorating enzymes of the tropolone-humulene skeleton to produce final eupenifeldin or derivatives. This chain is 2-oxoglutarate-dependent dioxygenase eupC, found in Phoma sp.